The chain runs to 151 residues: Phosphopantetheine adenylyltransferase (151 aa).

Substrate is bound at residue Ser-9. Residues 9-10 (SF) and His-17 contribute to the ATP site. Substrate is bound by residues Lys-41, Thr-73, and Arg-87. ATP contacts are provided by residues 88–90 (GLR), Glu-98, and 122–128 (TSFISSS).

The protein belongs to the bacterial CoaD family. Homohexamer. It depends on Mg(2+) as a cofactor.

It localises to the cytoplasm. It carries out the reaction (R)-4'-phosphopantetheine + ATP + H(+) = 3'-dephospho-CoA + diphosphate. It functions in the pathway cofactor biosynthesis; coenzyme A biosynthesis; CoA from (R)-pantothenate: step 4/5. Its function is as follows. Reversibly transfers an adenylyl group from ATP to 4'-phosphopantetheine, yielding dephospho-CoA (dPCoA) and pyrophosphate. The polypeptide is Phosphopantetheine adenylyltransferase (Flavobacterium psychrophilum (strain ATCC 49511 / DSM 21280 / CIP 103535 / JIP02/86)).